Here is a 329-residue protein sequence, read N- to C-terminus: Ketol-acid reductoisomerase (NADP(+)) (329 aa).

The 180-residue stretch at 2 to 181 (VQKYYESDAD…GATRAVVFET (180 aa)) folds into the KARI N-terminal Rossmann domain. Residues 25 to 28 (YGSQ), R48, S52, and 82 to 85 (DENQ) contribute to the NADP(+) site. H107 is a catalytic residue. G133 serves as a coordination point for NADP(+). Residues 182 to 327 (TFAEETETDL…AEIRGFMPQF (146 aa)) form the KARI C-terminal knotted domain. 4 residues coordinate Mg(2+): D190, E194, E226, and E230. S251 contacts substrate.

The protein belongs to the ketol-acid reductoisomerase family. The cofactor is Mg(2+).

The enzyme catalyses (2R)-2,3-dihydroxy-3-methylbutanoate + NADP(+) = (2S)-2-acetolactate + NADPH + H(+). It carries out the reaction (2R,3R)-2,3-dihydroxy-3-methylpentanoate + NADP(+) = (S)-2-ethyl-2-hydroxy-3-oxobutanoate + NADPH + H(+). The protein operates within amino-acid biosynthesis; L-isoleucine biosynthesis; L-isoleucine from 2-oxobutanoate: step 2/4. It functions in the pathway amino-acid biosynthesis; L-valine biosynthesis; L-valine from pyruvate: step 2/4. Its function is as follows. Involved in the biosynthesis of branched-chain amino acids (BCAA). Catalyzes an alkyl-migration followed by a ketol-acid reduction of (S)-2-acetolactate (S2AL) to yield (R)-2,3-dihydroxy-isovalerate. In the isomerase reaction, S2AL is rearranged via a Mg-dependent methyl migration to produce 3-hydroxy-3-methyl-2-ketobutyrate (HMKB). In the reductase reaction, this 2-ketoacid undergoes a metal-dependent reduction by NADPH to yield (R)-2,3-dihydroxy-isovalerate. This Methanoculleus marisnigri (strain ATCC 35101 / DSM 1498 / JR1) protein is Ketol-acid reductoisomerase (NADP(+)).